A 344-amino-acid chain; its full sequence is Arginine N-succinyltransferase (344 aa).

Leucine 125 is a binding site for succinyl-CoA. Residue histidine 229 is the Proton donor of the active site.

The protein belongs to the arginine N-succinyltransferase family.

The enzyme catalyses succinyl-CoA + L-arginine = N(2)-succinyl-L-arginine + CoA + H(+). It functions in the pathway amino-acid degradation; L-arginine degradation via AST pathway; L-glutamate and succinate from L-arginine: step 1/5. Catalyzes the transfer of succinyl-CoA to arginine to produce N(2)-succinylarginine. This is Arginine N-succinyltransferase from Escherichia coli O127:H6 (strain E2348/69 / EPEC).